Here is an 874-residue protein sequence, read N- to C-terminus: Adhesion G-protein coupled receptor D1 (874 aa).

A signal peptide spans 1-25 (MEKLLRLCCWYSWLLLFYYNFQVRG). Over 26-567 (VYSRSQDHPG…LARGHQVALS (542 aa)) the chain is Extracellular. The Pentraxin (PTX) domain occupies 79–276 (KGVTLLYYGR…ASPVMPTDAY (198 aa)). 9 N-linked (GlcNAc...) asparagine glycosylation sites follow: asparagine 90, asparagine 185, asparagine 282, asparagine 302, asparagine 319, asparagine 394, asparagine 476, asparagine 501, and asparagine 533. Residues 371 to 557 (QVTVEGSSAM…AILMQVVPLE (187 aa)) enclose the GAIN-B domain. Disulfide bonds link cysteine 510–cysteine 539 and cysteine 527–cysteine 541. A GPS region spans residues 510–557 (CAFLDFSSGEGVWSNHGCALTRGNLTYSVCRCTHLTNFAILMQVVPLE). The segment at 546–554 (NFAILMQVV) is stachel. Residue glutamine 563 participates in 17beta-hydroxy-5alpha-androstan-3-one binding. Residues 568-590 (SISYVGCSLSVLCLVATLVTFAV) form a helical membrane-spanning segment. Topologically, residues 591–601 (LSSVSTIRNQR) are cytoplasmic. Residues 602–623 (YHIHANLSFAVLVAQVLLLISF) form a helical membrane-spanning segment. At 624-632 (RLEPGTTPC) the chain is on the extracellular side. Cysteine 632 and cysteine 704 are oxidised to a cystine. A helical membrane pass occupies residues 633–655 (QVMAVLLHYFFLSAFAWMLVEGL). Topologically, residues 656 to 673 (HLYSMVIKVFGSEDSKHR) are cytoplasmic. Residues 674-695 (YYYGMGWGFPLLICIISLSFAM) traverse the membrane as a helical segment. Residues 696-710 (DSYGTSNNCWLSLAS) are Extracellular-facing. A helical membrane pass occupies residues 711-732 (GAIWAFVAPALFVIVVNIGILI). Residues 733–757 (AVTRVISQISADNYKIHGDPSAFKL) lie on the Cytoplasmic side of the membrane. Residues 758–780 (TAKAVAVLLPILGTSWVFGVLAV) form a helical membrane-spanning segment. The Extracellular segment spans residues 781–783 (NGC). The chain crosses the membrane as a helical span at residues 784 to 810 (AVVFQYMFATLNSLQGLFIFLFHCLLN). A 17beta-hydroxy-5alpha-androstan-3-one-binding site is contributed by asparagine 795. At 811-874 (SEVRAAFKHK…SAHRVDLSAV (64 aa)) the chain is on the cytoplasmic side. A disordered region spans residues 854–874 (TKLSPWDKSSHSAHRVDLSAV). A compositionally biased stretch (basic and acidic residues) spans 861 to 874 (KSSHSAHRVDLSAV).

This sequence belongs to the G-protein coupled receptor 2 family. Adhesion G-protein coupled receptor (ADGR) subfamily. Heterodimer of 2 chains generated by proteolytic processing; the large extracellular N-terminal fragment and the membrane-bound C-terminal fragment predominantly remain associated and non-covalently linked. Interacts with ESYT1; interaction takes place in absence of cytosolic calcium and inhibits the G protein-coupled receptor activity of ADGRD1. Autoproteolytically processed at the GPS region of the GAIN-B domain; this cleavage modulates receptor activity. Cleavage takes place early in the secretory pathway before N-glycosylation. As to expression, up-regulated in CD133(+) cell population of glioblastoma.

The protein resides in the cell membrane. With respect to regulation, forms a heterodimer of 2 chains generated by proteolytic processing that remain associated through non-covalent interactions mediated by the GAIN-B domain. In the inactivated receptor, the Stachel sequence (also named stalk) is embedded in the GAIN-B domain, where it adopts a beta-strand conformation. On activation, the Stachel moves into the 7 transmembrane region and adopts a twisted hook-shaped configuration that forms contacts within the receptor, leading to coupling of a G-alpha protein, which activates signaling. The cleaved GAIN-B and N-terminal domains can then dissociate from the rest of the receptor. Interaction with ESYT1 in absence of cytosolic calcium inhibits the G protein-coupled receptor activity; interaction and inhibition is relieved when cytosolic calcium increases. Activated by AP503, a small molecule that activates ADGRD1 without activating androgen nuclear receptors: AP503 enhances muscle strength without eliciting androgenic adverse effects. Activated by the 8E3E8 antibody that targets the N-terminus. Adhesion G-protein coupled receptor (aGPCR) for androgen hormone 5alpha-dihydrotestosterone (5alpha-DHT), also named 17beta-hydroxy-5alpha-androstan-3-one, the most potent hormone among androgens. Also activated by methenolone drug. Ligand binding causes a conformation change that triggers signaling via guanine nucleotide-binding proteins (G proteins) and modulates the activity of downstream effectors, such as adenylate cyclase. ADGRD1 is coupled to G(s) G proteins and mediates activation of adenylate cyclase activity. Acts as a 5alpha-DHT receptor in muscle cells, thereby increasing intracellular cyclic AMP (cAMP) levels and enhancing muscle strength. This is Adhesion G-protein coupled receptor D1 from Homo sapiens (Human).